The following is a 182-amino-acid chain: Carbonic anhydrase (182 aa).

Positions 64, 81, and 86 each coordinate Mg(2+).

It belongs to the gamma-class carbonic anhydrase family. Homotrimer. It depends on Mg(2+) as a cofactor. Requires Zn(2+) as cofactor.

The catalysed reaction is hydrogencarbonate + H(+) = CO2 + H2O. Its function is as follows. Reversible hydration of carbon dioxide. The sequence is that of Carbonic anhydrase from Geobacillus kaustophilus (strain HTA426).